The following is an 855-amino-acid chain: Suppressor of tumorigenicity 14 protein (855 aa).

A disordered region spans residues 1–20 (MGSDRARKGGGGPKDFGAGL). The Cytoplasmic portion of the chain corresponds to 1 to 55 (MGSDRARKGGGGPKDFGAGLKYNSRHEKVNGLEEGVEFLPVNNVKKVEKHGPGRW). The helical; Signal-anchor for type II membrane protein transmembrane segment at 56-76 (VVLAAVLIGLLLVLLGIGFLV) threads the bilayer. Residues 77–855 (WHLQYRDVRV…RDWIKENTGV (779 aa)) lie on the Extracellular side of the membrane. An SEA domain is found at 86–203 (VQKVFNGYMR…TSVVAFPTDS (118 aa)). N-linked (GlcNAc...) asparagine glycosylation is present at asparagine 109. Residues cysteine 214 and cysteine 244 are joined by a disulfide bond. 2 consecutive CUB domains span residues 214 to 334 (CSFG…FFQL) and 340 to 447 (CGGR…YLSY). A glycan (N-linked (GlcNAc...) asparagine) is linked at asparagine 302. Cystine bridges form between cysteine 340/cysteine 366, cysteine 397/cysteine 410, cysteine 453/cysteine 464, cysteine 459/cysteine 477, cysteine 471/cysteine 486, cysteine 488/cysteine 501, cysteine 496/cysteine 514, cysteine 508/cysteine 523, cysteine 525/cysteine 537, cysteine 532/cysteine 550, cysteine 544/cysteine 559, cysteine 567/cysteine 579, cysteine 574/cysteine 593, cysteine 587/cysteine 602, and cysteine 641/cysteine 657. LDL-receptor class A domains follow at residues 452-487 (PCPG…LNCS), 487-524 (SCDA…QGCS), 524-560 (SCPA…ASCP), and 566-603 (TCTK…KDCD). N-linked (GlcNAc...) asparagine glycosylation occurs at asparagine 485. In terms of domain architecture, Peptidase S1 spans 615 to 854 (VVGGTDADEG…FRDWIKENTG (240 aa)). Catalysis depends on charge relay system residues histidine 656 and aspartate 711. Asparagine 772 carries an N-linked (GlcNAc...) asparagine glycan. Intrachain disulfides connect cysteine 776/cysteine 790 and cysteine 801/cysteine 830. Serine 805 functions as the Charge relay system in the catalytic mechanism.

This sequence belongs to the peptidase S1 family. Interacts with CDCP1. May interact with TMEFF1. Interacts with iripin-3, a serine protease inhibitor from Ixodes ricinus saliva. Interacts with iripin-1, a serine protease inhibitor from Ixodes ricinus saliva.

It is found in the membrane. The catalysed reaction is Cleaves various synthetic substrates with Arg or Lys at the P1 position and prefers small side-chain amino acids, such as Ala and Gly, at the P2 position.. Exhibits trypsin-like activity as defined by cleavage of synthetic substrates with Arg or Lys as the P1 site. Involved in the terminal differentiation of keratinocytes through prostasin (PRSS8) activation and filaggrin (FLG) processing. Proteolytically cleaves and therefore activates TMPRSS13. This is Suppressor of tumorigenicity 14 protein (ST14) from Homo sapiens (Human).